The primary structure comprises 200 residues: Small ribosomal subunit protein uS4c (200 aa).

The 64-residue stretch at 91 to 154 (MRLDNVVFRL…NSRKMVTEAN (64 aa)) folds into the S4 RNA-binding domain.

It belongs to the universal ribosomal protein uS4 family. Part of the 30S ribosomal subunit. Contacts protein S5. The interaction surface between S4 and S5 is involved in control of translational fidelity.

It localises to the plastid. The protein localises to the chloroplast. In terms of biological role, one of the primary rRNA binding proteins, it binds directly to 16S rRNA where it nucleates assembly of the body of the 30S subunit. With S5 and S12 plays an important role in translational accuracy. The sequence is that of Small ribosomal subunit protein uS4c (rps4) from Oltmannsiellopsis viridis (Marine flagellate).